A 636-amino-acid chain; its full sequence is Chaperone protein DnaK (636 aa).

Thr-198 bears the Phosphothreonine; by autocatalysis mark. The segment at 600–636 is disordered; the sequence is IAQQQAQAQQGSAEAGAQSQEDDVVDAEFEEVKDDKK. A compositionally biased stretch (low complexity) spans 601–618; that stretch reads AQQQAQAQQGSAEAGAQS. Acidic residues predominate over residues 619–636; that stretch reads QEDDVVDAEFEEVKDDKK.

The protein belongs to the heat shock protein 70 family.

Its function is as follows. Acts as a chaperone. The protein is Chaperone protein DnaK of Vibrio vulnificus (strain CMCP6).